The sequence spans 356 residues: 3-dehydroquinate synthase (356 aa).

NAD(+) contacts are provided by residues 71-76 (EGEASK), 105-109 (GVTGD), 129-130 (TS), lysine 142, and lysine 151. Positions 184, 247, and 264 each coordinate Zn(2+).

It belongs to the sugar phosphate cyclases superfamily. Dehydroquinate synthase family. The cofactor is Co(2+). It depends on Zn(2+) as a cofactor. NAD(+) serves as cofactor.

It localises to the cytoplasm. It carries out the reaction 7-phospho-2-dehydro-3-deoxy-D-arabino-heptonate = 3-dehydroquinate + phosphate. Its pathway is metabolic intermediate biosynthesis; chorismate biosynthesis; chorismate from D-erythrose 4-phosphate and phosphoenolpyruvate: step 2/7. Its function is as follows. Catalyzes the conversion of 3-deoxy-D-arabino-heptulosonate 7-phosphate (DAHP) to dehydroquinate (DHQ). This chain is 3-dehydroquinate synthase, found in Lactococcus lactis subsp. cremoris (strain SK11).